The sequence spans 365 residues: Probable dual-specificity RNA methyltransferase RlmN (365 aa).

The Proton acceptor role is filled by glutamate 108. In terms of domain architecture, Radical SAM core spans histidine 114–aspartate 347. An intrachain disulfide couples cysteine 121 to cysteine 352. [4Fe-4S] cluster is bound by residues cysteine 128, cysteine 132, and cysteine 135. S-adenosyl-L-methionine-binding positions include glycine 178–glutamate 179, serine 210, serine 233–histidine 235, and asparagine 309. Cysteine 352 (S-methylcysteine intermediate) is an active-site residue.

This sequence belongs to the radical SAM superfamily. RlmN family. It depends on [4Fe-4S] cluster as a cofactor.

The protein localises to the cytoplasm. It catalyses the reaction adenosine(2503) in 23S rRNA + 2 reduced [2Fe-2S]-[ferredoxin] + 2 S-adenosyl-L-methionine = 2-methyladenosine(2503) in 23S rRNA + 5'-deoxyadenosine + L-methionine + 2 oxidized [2Fe-2S]-[ferredoxin] + S-adenosyl-L-homocysteine. It carries out the reaction adenosine(37) in tRNA + 2 reduced [2Fe-2S]-[ferredoxin] + 2 S-adenosyl-L-methionine = 2-methyladenosine(37) in tRNA + 5'-deoxyadenosine + L-methionine + 2 oxidized [2Fe-2S]-[ferredoxin] + S-adenosyl-L-homocysteine. In terms of biological role, specifically methylates position 2 of adenine 2503 in 23S rRNA and position 2 of adenine 37 in tRNAs. This chain is Probable dual-specificity RNA methyltransferase RlmN, found in Geobacillus kaustophilus (strain HTA426).